We begin with the raw amino-acid sequence, 275 residues long: Endolytic peptidoglycan transglycosylase RlpA (275 aa).

The first 22 residues, 1–22, serve as a signal peptide directing secretion; sequence MQIKTITLKLSAVSLGALFFSG. Cysteine 23 is lipidated: N-palmitoyl cysteine. Cysteine 23 is lipidated: S-diacylglycerol cysteine. The region spanning 200–275 is the SPOR domain; it reads IYEGGNFMVQ…AFAGAFVVRE (76 aa).

This sequence belongs to the RlpA family.

Its subcellular location is the cell membrane. Functionally, lytic transglycosylase with a strong preference for naked glycan strands that lack stem peptides. This chain is Endolytic peptidoglycan transglycosylase RlpA, found in Campylobacter jejuni subsp. jejuni serotype O:2 (strain ATCC 700819 / NCTC 11168).